The primary structure comprises 611 residues: DNA mismatch repair protein MutL (611 aa).

This sequence belongs to the DNA mismatch repair MutL/HexB family.

In terms of biological role, this protein is involved in the repair of mismatches in DNA. It is required for dam-dependent methyl-directed DNA mismatch repair. May act as a 'molecular matchmaker', a protein that promotes the formation of a stable complex between two or more DNA-binding proteins in an ATP-dependent manner without itself being part of a final effector complex. In Rickettsia bellii (strain RML369-C), this protein is DNA mismatch repair protein MutL.